Here is a 104-residue protein sequence, read N- to C-terminus: Putative pterin-4-alpha-carbinolamine dehydratase (104 aa).

Belongs to the pterin-4-alpha-carbinolamine dehydratase family.

The enzyme catalyses (4aS,6R)-4a-hydroxy-L-erythro-5,6,7,8-tetrahydrobiopterin = (6R)-L-erythro-6,7-dihydrobiopterin + H2O. The polypeptide is Putative pterin-4-alpha-carbinolamine dehydratase (pcbD) (Rhizobium meliloti (strain 1021) (Ensifer meliloti)).